A 512-amino-acid chain; its full sequence is 2,3-bisphosphoglycerate-independent phosphoglycerate mutase (512 aa).

Mn(2+)-binding residues include Asp-12 and Ser-62. The Phosphoserine intermediate role is filled by Ser-62. Residues His-123, 154–155 (RD), Arg-181, Arg-187, 253–256 (RPDR), and Lys-336 contribute to the substrate site. Mn(2+) contacts are provided by Asp-403, His-407, Asp-444, His-445, and His-462.

The protein belongs to the BPG-independent phosphoglycerate mutase family. Monomer. Mn(2+) serves as cofactor.

The enzyme catalyses (2R)-2-phosphoglycerate = (2R)-3-phosphoglycerate. It functions in the pathway carbohydrate degradation; glycolysis; pyruvate from D-glyceraldehyde 3-phosphate: step 3/5. Catalyzes the interconversion of 2-phosphoglycerate and 3-phosphoglycerate. This chain is 2,3-bisphosphoglycerate-independent phosphoglycerate mutase, found in Onion yellows phytoplasma (strain OY-M).